A 389-amino-acid polypeptide reads, in one-letter code: Lipid-A-disaccharide synthase (389 aa).

The protein belongs to the LpxB family.

The enzyme catalyses a lipid X + a UDP-2-N,3-O-bis[(3R)-3-hydroxyacyl]-alpha-D-glucosamine = a lipid A disaccharide + UDP + H(+). Its pathway is bacterial outer membrane biogenesis; LPS lipid A biosynthesis. Condensation of UDP-2,3-diacylglucosamine and 2,3-diacylglucosamine-1-phosphate to form lipid A disaccharide, a precursor of lipid A, a phosphorylated glycolipid that anchors the lipopolysaccharide to the outer membrane of the cell. This is Lipid-A-disaccharide synthase from Burkholderia multivorans (strain ATCC 17616 / 249).